The primary structure comprises 110 residues: Iron-sulfur cluster assembly protein CyaY (110 aa).

Belongs to the frataxin family.

Involved in iron-sulfur (Fe-S) cluster assembly. May act as a regulator of Fe-S biogenesis. The sequence is that of Iron-sulfur cluster assembly protein CyaY from Azotobacter vinelandii (strain DJ / ATCC BAA-1303).